We begin with the raw amino-acid sequence, 89 residues long: Small ribosomal subunit protein uS15 (89 aa).

The protein belongs to the universal ribosomal protein uS15 family. In terms of assembly, part of the 30S ribosomal subunit. Forms a bridge to the 50S subunit in the 70S ribosome, contacting the 23S rRNA.

In terms of biological role, one of the primary rRNA binding proteins, it binds directly to 16S rRNA where it helps nucleate assembly of the platform of the 30S subunit by binding and bridging several RNA helices of the 16S rRNA. Its function is as follows. Forms an intersubunit bridge (bridge B4) with the 23S rRNA of the 50S subunit in the ribosome. The sequence is that of Small ribosomal subunit protein uS15 from Trichodesmium erythraeum (strain IMS101).